Here is a 158-residue protein sequence, read N- to C-terminus: MFRPLVKRVVTRRFLAAANNSNAHIEIRTLEDLAKLQSLDNVDPKLISKLINDKTNELNIKNELQMLKQLQAEEQKTQETSLKKFVRPAWIFLLMGSIVYLSCHYVWWKLDYEEKELEYTHKVHQLESELAALNEAHNSSVSSDKNSKRSSRKWYKFW.

The transit peptide at 1 to 15 directs the protein to the mitochondrion; it reads MFRPLVKRVVTRRFL. The Mitochondrial matrix segment spans residues 16–85; the sequence is AAANNSNAHI…KTQETSLKKF (70 aa). The helical transmembrane segment at 86–108 threads the bilayer; that stretch reads VRPAWIFLLMGSIVYLSCHYVWW. Topologically, residues 109–158 are mitochondrial intermembrane; that stretch reads KLDYEEKELEYTHKVHQLESELAALNEAHNSSVSSDKNSKRSSRKWYKFW. The stretch at 110 to 140 forms a coiled coil; that stretch reads LDYEEKELEYTHKVHQLESELAALNEAHNSS.

Belongs to the INA17 family. In terms of assembly, component of the inner membrane assembly (INA) complex, composed of INA17 and INA22. Interacts with a subset of F(1)F(0)-ATP synthase subunits of the F(1)-domain and the peripheral stalk.

Its subcellular location is the mitochondrion inner membrane. Component of the INA complex (INAC) that promotes the biogenesis of mitochondrial F(1)F(0)-ATP synthase. INAC facilitates the assembly of the peripheral stalk and promotes the assembly of the catalytic F(1)-domain with the membrane-embedded F(0)-domain. The protein is Inner membrane assembly complex subunit 17 of Kluyveromyces lactis (strain ATCC 8585 / CBS 2359 / DSM 70799 / NBRC 1267 / NRRL Y-1140 / WM37) (Yeast).